The primary structure comprises 138 residues: MVLYFSPVLTFFLANFFNSKSTTTENLQVFLVENQHRDSKRKINPTFSKKGIEVRQQNENLWSKIVALRFDYSVWGIIQLVLMMGLFFYINSVALIEDLPIDEEFNSVEEFYTAATSAYNQNAYTVGLPVHLCAYASI.

Residues 1-24 form the signal peptide; the sequence is MVLYFSPVLTFFLANFFNSKSTTT. Over 25–75 the chain is Extracellular; the sequence is ENLQVFLVENQHRDSKRKINPTFSKKGIEVRQQNENLWSKIVALRFDYSVW. The chain crosses the membrane as a helical span at residues 76 to 96; sequence GIIQLVLMMGLFFYINSVALI. Residues 97–138 are Cytoplasmic-facing; the sequence is EDLPIDEEFNSVEEFYTAATSAYNQNAYTVGLPVHLCAYASI.

The protein belongs to the RNase K family.

Its subcellular location is the membrane. Functionally, endoribonuclease. This Ceratitis capitata (Mediterranean fruit fly) protein is Ribonuclease kappa-A.